The chain runs to 361 residues: Chorismate synthase (361 aa).

The NADP(+) site is built by Arg48 and Arg54. Residues 125-127 (RSS), 238-239 (NA), Gly278, 293-297 (KPTSS), and Arg319 contribute to the FMN site.

This sequence belongs to the chorismate synthase family. As to quaternary structure, homotetramer. FMNH2 serves as cofactor.

It carries out the reaction 5-O-(1-carboxyvinyl)-3-phosphoshikimate = chorismate + phosphate. The protein operates within metabolic intermediate biosynthesis; chorismate biosynthesis; chorismate from D-erythrose 4-phosphate and phosphoenolpyruvate: step 7/7. In terms of biological role, catalyzes the anti-1,4-elimination of the C-3 phosphate and the C-6 proR hydrogen from 5-enolpyruvylshikimate-3-phosphate (EPSP) to yield chorismate, which is the branch point compound that serves as the starting substrate for the three terminal pathways of aromatic amino acid biosynthesis. This reaction introduces a second double bond into the aromatic ring system. This is Chorismate synthase from Escherichia coli (strain K12 / MC4100 / BW2952).